A 651-amino-acid polypeptide reads, in one-letter code: Threonine--tRNA ligase (651 aa).

Residues 1-61 (MPTIQLPDGS…DKDVSLRIIT (61 aa)) form the TGS domain. The tract at residues 242 to 533 (DHRLLAKKMD…LLEESAGKLP (292 aa)) is catalytic. Residues C333, H384, and H510 each coordinate Zn(2+). The tract at residues 631–651 (ISQRSRKSPAPSPLFPVGGES) is disordered.

Belongs to the class-II aminoacyl-tRNA synthetase family. As to quaternary structure, homodimer. Requires Zn(2+) as cofactor.

It is found in the cytoplasm. It carries out the reaction tRNA(Thr) + L-threonine + ATP = L-threonyl-tRNA(Thr) + AMP + diphosphate + H(+). Its function is as follows. Catalyzes the attachment of threonine to tRNA(Thr) in a two-step reaction: L-threonine is first activated by ATP to form Thr-AMP and then transferred to the acceptor end of tRNA(Thr). Also edits incorrectly charged L-seryl-tRNA(Thr). This Coxiella burnetii (strain RSA 493 / Nine Mile phase I) protein is Threonine--tRNA ligase.